The following is a 146-amino-acid chain: Snaclec coagulation factor X-activating enzyme light chain 1 (146 aa).

The N-terminal stretch at 1–23 (MGRFISVSFGCLVVFLSLSGTEA) is a signal peptide. A disulfide bridge links Cys-27 with Cys-38. Residues 34–145 (YEQHCYKGFN…CNFIAPVVCK (112 aa)) form the C-type lectin domain. Residue Asn-47 is glycosylated (N-linked (GlcNAc...) (complex) asparagine). 2 disulfides stabilise this stretch: Cys-55/Cys-144 and Cys-121/Cys-136.

The protein belongs to the snaclec family. As to quaternary structure, heterotrimer; disulfide-linked. The heterotrimer consists of 1 heavy chain (a metalloproteinase) and 2 light chains: LC1 and LC2. N-glycosylated; probably required for conformation. Removal of easily accessible sugars does not change its functional capacity, but removal of the core sugars with N-glycanase causes a virtually complete loss of enzyme activity, apparently as a result of major conformational changes in the molecule. Not O-glycosylated. In terms of tissue distribution, expressed by the venom gland.

It is found in the secreted. Its function is as follows. Regulatory subunit of the blood coagulation factor X- and IX-activating enzyme. The enzyme activates coagulation factor X (F10) by cleaving the Arg-Ile bond and is also able to activate coagulation factor IX (F9) and protein S (PROS1) by specific cleavage of Arg-Ile and Arg-Val bonds. May serve as an exosite by which the enzyme recognizes and binds to the Gla domain of factor X (F10) and factor IX (F9) in a calcium-dependent manner. In Daboia siamensis (Eastern Russel's viper), this protein is Snaclec coagulation factor X-activating enzyme light chain 1 (LC1).